Reading from the N-terminus, the 601-residue chain is Glutamine--fructose-6-phosphate aminotransferase [isomerizing] (601 aa).

Catalysis depends on C2, which acts as the Nucleophile; for GATase activity. Residues 2–216 (CGIVGYIGTN…DKEIVIVTKD (215 aa)) enclose the Glutamine amidotransferase type-2 domain. SIS domains lie at 282–421 (ILDE…EIGD) and 453–591 (IAGE…VDKP). The For Fru-6P isomerization activity role is filled by K596.

As to quaternary structure, homodimer.

It localises to the cytoplasm. The catalysed reaction is D-fructose 6-phosphate + L-glutamine = D-glucosamine 6-phosphate + L-glutamate. Functionally, catalyzes the first step in hexosamine metabolism, converting fructose-6P into glucosamine-6P using glutamine as a nitrogen source. In Listeria innocua serovar 6a (strain ATCC BAA-680 / CLIP 11262), this protein is Glutamine--fructose-6-phosphate aminotransferase [isomerizing].